We begin with the raw amino-acid sequence, 399 residues long: Elongation factor Tu (399 aa).

Positions 10–209 (KPHVNIGTIG…AVDDYIPTPV (200 aa)) constitute a tr-type G domain. Residues 19–26 (GHVDHGKT) form a G1 region. 19-26 (GHVDHGKT) is a binding site for GTP. Residue T26 coordinates Mg(2+). Residues 62–66 (GITIN) form a G2 region. The segment at 83–86 (DCPG) is G3. GTP contacts are provided by residues 83–87 (DCPGH) and 138–141 (NKCD). Positions 138 to 141 (NKCD) are G4. The segment at 175-177 (SAY) is G5.

It belongs to the TRAFAC class translation factor GTPase superfamily. Classic translation factor GTPase family. EF-Tu/EF-1A subfamily. Monomer.

Its subcellular location is the cytoplasm. It carries out the reaction GTP + H2O = GDP + phosphate + H(+). In terms of biological role, GTP hydrolase that promotes the GTP-dependent binding of aminoacyl-tRNA to the A-site of ribosomes during protein biosynthesis. This is Elongation factor Tu from Bifidobacterium longum (strain DJO10A).